Consider the following 280-residue polypeptide: Adenosylcobinamide-GDP ribazoletransferase (280 aa).

The next 7 membrane-spanning stretches (helical) occupy residues 4 to 24 (YLLA…GITM), 34 to 54 (IFFY…VAYA), 58 to 78 (VFPG…ITGF), 108 to 128 (TLGT…YGSI), 136 to 156 (IAAF…IAEV), 197 to 217 (LIGF…IGLI), and 254 to 274 (ITAL…YLGG).

It belongs to the CobS family. The cofactor is Mg(2+).

It is found in the cell membrane. It catalyses the reaction alpha-ribazole + adenosylcob(III)inamide-GDP = adenosylcob(III)alamin + GMP + H(+). The catalysed reaction is alpha-ribazole 5'-phosphate + adenosylcob(III)inamide-GDP = adenosylcob(III)alamin 5'-phosphate + GMP + H(+). It functions in the pathway cofactor biosynthesis; adenosylcobalamin biosynthesis; adenosylcobalamin from cob(II)yrinate a,c-diamide: step 7/7. Joins adenosylcobinamide-GDP and alpha-ribazole to generate adenosylcobalamin (Ado-cobalamin). Also synthesizes adenosylcobalamin 5'-phosphate from adenosylcobinamide-GDP and alpha-ribazole 5'-phosphate. This is Adenosylcobinamide-GDP ribazoletransferase from Methanosarcina mazei (strain ATCC BAA-159 / DSM 3647 / Goe1 / Go1 / JCM 11833 / OCM 88) (Methanosarcina frisia).